We begin with the raw amino-acid sequence, 161 residues long: SsrA-binding protein (161 aa).

This sequence belongs to the SmpB family.

Its subcellular location is the cytoplasm. Its function is as follows. Required for rescue of stalled ribosomes mediated by trans-translation. Binds to transfer-messenger RNA (tmRNA), required for stable association of tmRNA with ribosomes. tmRNA and SmpB together mimic tRNA shape, replacing the anticodon stem-loop with SmpB. tmRNA is encoded by the ssrA gene; the 2 termini fold to resemble tRNA(Ala) and it encodes a 'tag peptide', a short internal open reading frame. During trans-translation Ala-aminoacylated tmRNA acts like a tRNA, entering the A-site of stalled ribosomes, displacing the stalled mRNA. The ribosome then switches to translate the ORF on the tmRNA; the nascent peptide is terminated with the 'tag peptide' encoded by the tmRNA and targeted for degradation. The ribosome is freed to recommence translation, which seems to be the essential function of trans-translation. The chain is SsrA-binding protein from Vibrio vulnificus (strain YJ016).